The sequence spans 199 residues: Probable nicotinate-nucleotide adenylyltransferase (199 aa).

It belongs to the NadD family.

It carries out the reaction nicotinate beta-D-ribonucleotide + ATP + H(+) = deamido-NAD(+) + diphosphate. It functions in the pathway cofactor biosynthesis; NAD(+) biosynthesis; deamido-NAD(+) from nicotinate D-ribonucleotide: step 1/1. Functionally, catalyzes the reversible adenylation of nicotinate mononucleotide (NaMN) to nicotinic acid adenine dinucleotide (NaAD). This chain is Probable nicotinate-nucleotide adenylyltransferase, found in Roseiflexus sp. (strain RS-1).